The chain runs to 291 residues: 4-hydroxy-tetrahydrodipicolinate synthase (291 aa).

Thr-45 provides a ligand contact to pyruvate. Catalysis depends on Tyr-131, which acts as the Proton donor/acceptor. Lys-159 functions as the Schiff-base intermediate with substrate in the catalytic mechanism. A pyruvate-binding site is contributed by Ile-202.

The protein belongs to the DapA family. In terms of assembly, homotetramer; dimer of dimers.

Its subcellular location is the cytoplasm. It carries out the reaction L-aspartate 4-semialdehyde + pyruvate = (2S,4S)-4-hydroxy-2,3,4,5-tetrahydrodipicolinate + H2O + H(+). It participates in amino-acid biosynthesis; L-lysine biosynthesis via DAP pathway; (S)-tetrahydrodipicolinate from L-aspartate: step 3/4. In terms of biological role, catalyzes the condensation of (S)-aspartate-beta-semialdehyde [(S)-ASA] and pyruvate to 4-hydroxy-tetrahydrodipicolinate (HTPA). The chain is 4-hydroxy-tetrahydrodipicolinate synthase from Methanococcoides burtonii (strain DSM 6242 / NBRC 107633 / OCM 468 / ACE-M).